A 228-amino-acid polypeptide reads, in one-letter code: Isonitrile hydratase (228 aa).

The active site involves Cys101.

Homodimer.

It catalyses the reaction N-cyclohexylformamide = cyclohexyl isocyanide + H2O. Its activity is regulated as follows. Sensitive to thiol reagents and oxidizing reagents, but is not influenced by chelators or reducing reagents. Its function is as follows. Catalyzes the hydration of cyclohexyl isocyanide to N-cyclohexylformamide. Acts on various isonitriles, but not on nitriles or amides. Probably involved in detoxification. The protein is Isonitrile hydratase (inhA) of Pseudomonas putida (Arthrobacter siderocapsulatus).